The sequence spans 445 residues: CBL-interacting serine/threonine-protein kinase 8 (445 aa).

The 254-residue stretch at 9–262 (YELGRTIGEG…IAEIRKDEWF (254 aa)) folds into the Protein kinase domain. ATP-binding positions include 15–23 (IGEGTFAKV) and lysine 38. Aspartate 132 (proton acceptor) is an active-site residue. Residues 150–177 (DFGLSALPEQGVTILKTTCGTPNYVAPE) are activation loop. Serine 154 carries the phosphoserine modification. Threonine 166 is subject to Phosphothreonine. The region spanning 302-326 (TGPLTLNAFDLIILSQGLNLATLFD) is the NAF domain. The segment at 333 to 362 (KHQTRFISHKPANVVLSSMEVVSQSMGFKT) is PPI.

Belongs to the protein kinase superfamily. CAMK Ser/Thr protein kinase family. SNF1 subfamily. Interacts with CBL1 and CBL9. Requires Mn(2+) as cofactor. Mostly expressed in roots, and, to a lower extent, in leaves, stems, flowers, and siliques.

It catalyses the reaction L-seryl-[protein] + ATP = O-phospho-L-seryl-[protein] + ADP + H(+). The enzyme catalyses L-threonyl-[protein] + ATP = O-phospho-L-threonyl-[protein] + ADP + H(+). Functionally, CIPK serine-threonine protein kinases interact with CBL proteins. Binding of a CBL protein to the regulatory NAF domain of CIPK protein lead to the activation of the kinase in a calcium-dependent manner. The protein is CBL-interacting serine/threonine-protein kinase 8 (CIPK8) of Arabidopsis thaliana (Mouse-ear cress).